Here is a 533-residue protein sequence, read N- to C-terminus: Retinoid isomerohydrolase (533 aa).

S2 carries the post-translational modification N-acetylserine. T101 and T105 each carry phosphothreonine. C112 is lipidated: S-palmitoyl cysteine; in membrane form. Position 113 is an N6-acetyllysine (K113). Phosphoserine is present on S117. Fe cation is bound at residue H180. C231 is lipidated: S-palmitoyl cysteine; in membrane form. Fe cation is bound by residues H241 and H313. Residues C329 and C330 are each lipidated (S-palmitoyl cysteine; in membrane form). Residue H527 participates in Fe cation binding.

It belongs to the carotenoid oxygenase family. As to quaternary structure, interacts with MYO7A; this mediates light-dependent intracellular transport of RPE65. It depends on Fe(2+) as a cofactor. Palmitoylation by LRAT regulates ligand binding specificity; the palmitoylated form (membrane form) specifically binds all-trans-retinyl-palmitate, while the soluble unpalmitoylated form binds all-trans-retinol (vitamin A). Retinal pigment epithelium specific.

It is found in the cytoplasm. Its subcellular location is the cell membrane. It localises to the microsome membrane. The catalysed reaction is an all-trans-retinyl ester + H2O = 11-cis-retinol + a fatty acid + H(+). It catalyses the reaction lutein = (3R,3'S)-zeaxanthin. The enzyme catalyses all-trans-retinyl hexadecanoate + H2O = 11-cis-retinol + hexadecanoate + H(+). Critical isomerohydrolase in the retinoid cycle involved in regeneration of 11-cis-retinal, the chromophore of rod and cone opsins. Catalyzes the cleavage and isomerization of all-trans-retinyl fatty acid esters to 11-cis-retinol which is further oxidized by 11-cis retinol dehydrogenase to 11-cis-retinal for use as visual chromophore. Essential for the production of 11-cis retinal for both rod and cone photoreceptors. Also capable of catalyzing the isomerization of lutein to meso-zeaxanthin an eye-specific carotenoid. The soluble form binds vitamin A (all-trans-retinol), making it available for LRAT processing to all-trans-retinyl ester. The membrane form, palmitoylated by LRAT, binds all-trans-retinyl esters, making them available for IMH (isomerohydrolase) processing to all-cis-retinol. The soluble form is regenerated by transferring its palmitoyl groups onto 11-cis-retinol, a reaction catalyzed by LRAT. The sequence is that of Retinoid isomerohydrolase (Rpe65) from Mus musculus (Mouse).